The sequence spans 486 residues: Glutamyl-tRNA(Gln) amidotransferase subunit A (486 aa).

Active-site charge relay system residues include lysine 74 and serine 149. The active-site Acyl-ester intermediate is the serine 173.

The protein belongs to the amidase family. GatA subfamily. Heterotrimer of A, B and C subunits.

It carries out the reaction L-glutamyl-tRNA(Gln) + L-glutamine + ATP + H2O = L-glutaminyl-tRNA(Gln) + L-glutamate + ADP + phosphate + H(+). Functionally, allows the formation of correctly charged Gln-tRNA(Gln) through the transamidation of misacylated Glu-tRNA(Gln) in organisms which lack glutaminyl-tRNA synthetase. The reaction takes place in the presence of glutamine and ATP through an activated gamma-phospho-Glu-tRNA(Gln). The protein is Glutamyl-tRNA(Gln) amidotransferase subunit A of Prochlorococcus marinus (strain SARG / CCMP1375 / SS120).